The chain runs to 115 residues: General stress protein 17M (115 aa).

This is General stress protein 17M (yflT) from Bacillus subtilis (strain 168).